Here is a 160-residue protein sequence, read N- to C-terminus: Fimbrial protein (160 aa).

The propeptide at 1 to 7 is leader sequence; it reads MKSLQKG. The residue at position 8 (Phe-8) is an N-methylphenylalanine. Residues 8 to 28 traverse the membrane as a helical segment; sequence FTLIELMIVVAIIGILAAFAI.

The protein belongs to the N-Me-Phe pilin family. The pili are polar flexible filaments of about 5.4 nanometers diameter and 2.5 micrometers average length; they consist of only a single polypeptide chain arranged in a helical configuration of five subunits per turn in the assembled pilus.

The protein localises to the fimbrium. The protein resides in the membrane. This Dichelobacter nodosus (Bacteroides nodosus) protein is Fimbrial protein (fimA).